The following is an 88-amino-acid chain: Large ribosomal subunit protein bL27 (88 aa).

The tract at residues 1-25 is disordered; sequence MAHKKGASSSSNGRDSEAKRLGVKR.

Belongs to the bacterial ribosomal protein bL27 family.

This chain is Large ribosomal subunit protein bL27, found in Corynebacterium diphtheriae (strain ATCC 700971 / NCTC 13129 / Biotype gravis).